The chain runs to 331 residues: DNA-directed RNA polymerase subunit alpha (331 aa).

The alpha N-terminal domain (alpha-NTD) stretch occupies residues 1–242 (MEKFLRYNIQ…EHYKPIVTEL (242 aa)). Positions 258-331 (VSSSKSSLAI…RNLKLKEEQN (74 aa)) are alpha C-terminal domain (alpha-CTD).

It belongs to the RNA polymerase alpha chain family. In terms of assembly, homodimer. The RNAP catalytic core consists of 2 alpha, 1 beta, 1 beta' and 1 omega subunit. When a sigma factor is associated with the core the holoenzyme is formed, which can initiate transcription.

It catalyses the reaction RNA(n) + a ribonucleoside 5'-triphosphate = RNA(n+1) + diphosphate. Functionally, DNA-dependent RNA polymerase catalyzes the transcription of DNA into RNA using the four ribonucleoside triphosphates as substrates. The chain is DNA-directed RNA polymerase subunit alpha from Malacoplasma penetrans (strain HF-2) (Mycoplasma penetrans).